Here is a 698-residue protein sequence, read N- to C-terminus: Trafficking protein particle complex III-specific subunit 85 (698 aa).

2 disordered regions span residues 82–125 (VGQH…LFQR) and 678–698 (VDSA…SFIG). Positions 678–689 (VDSAPRPSEKNL) are enriched in basic and acidic residues.

This sequence belongs to the TRS85 family. In terms of assembly, part of the multisubunit TRAPP (transport protein particle) III complex composed of BET3, BET5, TRS20, TRS23, TRS31, TRS33 and TRS85.

Its subcellular location is the preautophagosomal structure. Specific subunit of the TRAPP III complex that acts as an autophagy-specific guanine nucleotide exchange factor (GEF) for YPT1. TRS85 directs the TRAPP III complex to the phagophore assembly site (PAS) that is involved in autophagosome formation. Required for membrane expansion during autophagy and the CVT pathway. Required for sporulation. Has a role late in meiosis following DNA replication. In Saccharomyces cerevisiae (strain ATCC 204508 / S288c) (Baker's yeast), this protein is Trafficking protein particle complex III-specific subunit 85 (TRS85).